Reading from the N-terminus, the 553-residue chain is MAGAGLRAAARRWLLCGGQGGPRAASSSPSCPGCGPPGPGAHCPSTPRSAPADGADLSAHLWARYQDMRRLVHDLLPPEVCSLLNPAAIYANNEISLSDVEVYGFDYDYTLAQYADALHPEIFSAARDILIEHYKYPEGIRKYDYDPSFAIRGLHYDIQKSLLMKIDAFHYVQLGTAYRGLQPVPDDEVVDLYGGTQHIPLYQMSGFYGKGPSIKQFMDIFSLPEMALLSCVVDYFLGHGLEFDQVHLYKDVTDAIRDVHVKGLMYQWIEQDMEKYILRGDETFAVLSRLVAHGKQLFLITNSPFSFVDKGMRHMVGPDWRQLFDVVIVQADKPNFFTDRRKPFRKLDEKGSLHWDRITRLEKGKIYRQGNLFDFLRLTEWRGPRVLYFGDHLYSDLADLMLRHGWRTGAIIPELEREIRIINTEQYMHSLTWQQALTGLLERMQTYQDAESRQVLATWMKERQELRCITKALFNAQFGSIFRTFHNPTYFSRRLVRFSDLYMASLSCLLNYSVDFTFYPRRTPLQHEAPLWMDQLCTGCMKTPFLGDMAHIR.

Residues 26 to 51 form a disordered region; the sequence is SSSPSCPGCGPPGPGAHCPSTPRSAP. The active-site Nucleophile is aspartate 106. Mg(2+) contacts are provided by aspartate 106, aspartate 108, and aspartate 391. Residue aspartate 108 is the Proton donor of the active site.

This sequence belongs to the 5'(3')-deoxyribonucleotidase family. As to quaternary structure, interacts with tyrosine 3-monooxygenase TH; the interaction results in reduced phosphorylation and decreased catalytic activity of TH. Expressed in eye iridocorneal angle.

Its subcellular location is the cytoplasm. Its function is as follows. Promotes dephosphorylation of tyrosine 3-monooxygenase TH which decreases TH catalytic activity and leads to reduced synthesis of catecholamines including dopamine, noradrenaline and adrenaline. The exact mechanism of activity is unknown but may act as a phosphatase or promote the activity of phosphatases or may inhibit phosphorylation by acting as a barrier to interfere with protein kinase access. The protein is 5'-nucleotidase domain-containing protein 2 (Nt5dc2) of Rattus norvegicus (Rat).